The primary structure comprises 249 residues: Probable transcriptional regulatory protein Psyc_0938 (249 aa).

Belongs to the TACO1 family.

Its subcellular location is the cytoplasm. The polypeptide is Probable transcriptional regulatory protein Psyc_0938 (Psychrobacter arcticus (strain DSM 17307 / VKM B-2377 / 273-4)).